The chain runs to 207 residues: Ras-related protein Rab-8B (207 aa).

GTP is bound by residues serine 17, glycine 18, valine 19, glycine 20, lysine 21, threonine 22, cysteine 23, threonine 35, serine 39, and threonine 40. Threonine 22 contacts Mg(2+). 2 short sequence motifs (switch) span residues 31 to 45 (DAFN…GIDF) and 63 to 80 (DTAG…YYRG). Mg(2+) contacts are provided by threonine 40 and aspartate 63. Glycine 66 contributes to the GTP binding site. Threonine 72 carries the post-translational modification Phosphothreonine. GTP contacts are provided by asparagine 121, lysine 122, aspartate 124, alanine 152, and lysine 153. The residue at position 180 (serine 180) is a Phosphoserine. Cysteine 204 is subject to Cysteine methyl ester. Cysteine 204 carries the S-geranylgeranyl cysteine lipid modification. Positions 205–207 (LLL) are cleaved as a propeptide — removed in mature form.

Belongs to the small GTPase superfamily. Rab family. As to quaternary structure, associated with actin, delta-catenin and alpha and beta tubulins. Interacts with OTOF. Interacts with PEX5R. Interacts with RAB3IP. Interacts with VIM. Interacts with CDH1. Interacts with MICALL2. Interacts with GDI1, GDI2, CHML and CHM; phosphorylation at Thr-72 disrupts these interactions. Interacts with MICAL1. Mg(2+) is required as a cofactor. In terms of processing, phosphorylation of Thr-72 in the switch II region by LRRK2 prevents the association of RAB regulatory proteins, including CHM, CHML and RAB GDP dissociation inhibitors GDI1 and GDI2.

It is found in the cell membrane. Its subcellular location is the cytoplasmic vesicle. It localises to the phagosome membrane. The protein localises to the endosome membrane. The enzyme catalyses GTP + H2O = GDP + phosphate + H(+). With respect to regulation, regulated by guanine nucleotide exchange factors (GEFs) including RAB3IP/RABIN8 which promotes the exchange of bound GDP for free GTP. Regulated by GTPase activating proteins (GAPs) which increase the GTP hydrolysis activity. Inhibited by GDP dissociation inhibitors (GDIs). Its function is as follows. The small GTPases Rab are key regulators of intracellular membrane trafficking, from the formation of transport vesicles to their fusion with membranes. Rabs cycle between an inactive GDP-bound form and an active GTP-bound form that is able to recruit to membranes different sets of downstream effectors directly responsible for vesicle formation, movement, tethering and fusion. RAB8B may be involved in polarized vesicular trafficking and neurotransmitter release. May participate in cell junction dynamics in Sertoli cells. May also participate in the export of a subset of neosynthesized proteins through a Rab8-Rab10-Rab11-dependent endososomal export route. This is Ras-related protein Rab-8B (RAB8B) from Pongo abelii (Sumatran orangutan).